Consider the following 209-residue polypeptide: Large ribosomal subunit protein bL9 (209 aa).

Residues 169–209 are disordered; the sequence is RDGASFTEDYDPNAEPGLATEAEEAVADADDNAETNSEESL. Positions 189–209 are enriched in acidic residues; the sequence is EAEEAVADADDNAETNSEESL.

Belongs to the bacterial ribosomal protein bL9 family.

In terms of biological role, binds to the 23S rRNA. This chain is Large ribosomal subunit protein bL9, found in Zymomonas mobilis subsp. mobilis (strain ATCC 31821 / ZM4 / CP4).